The primary structure comprises 301 residues: Recombination-associated protein RdgC (301 aa).

Belongs to the RdgC family.

Its subcellular location is the cytoplasm. The protein resides in the nucleoid. Its function is as follows. May be involved in recombination. This chain is Recombination-associated protein RdgC, found in Xanthomonas oryzae pv. oryzae (strain KACC10331 / KXO85).